The sequence spans 327 residues: Carboxylesterase 20 (327 aa).

An Involved in the stabilization of the negatively charged intermediate by the formation of the oxyanion hole motif is present at residues 87-89; it reads HGG. The active-site Nucleophile is the Ser166. Catalysis depends on residues Asp272 and His302.

The protein belongs to the 'GDXG' lipolytic enzyme family. Expressed in roots, stems, flowers and siliques.

The catalysed reaction is a carboxylic ester + H2O = an alcohol + a carboxylate + H(+). Its activity is regulated as follows. Esterase activity measured in vitro with the synthetic substrate p-nitrophenyl acetate (pNPA) is inhibited by strigolactone. Functionally, carboxylesterase that possesses esterase activity in vitro with the synthetic substrate p-nitrophenyl acetate (pNPA). Binds strigolactones, but is not able to hydrolyze them. May be involved in the regulation of shoot branching. The protein is Carboxylesterase 20 of Arabidopsis thaliana (Mouse-ear cress).